The primary structure comprises 152 residues: Sec-independent protein translocase protein TatB (152 aa).

Residues 1–21 (MFDVAPSELLLVAVVALVVIG) traverse the membrane as a helical segment. A compositionally biased stretch (basic and acidic residues) spans 60–71 (EDMEKRWAEENA). Positions 60 to 152 (EDMEKRWAEE…KEADQQEKQS (93 aa)) are disordered. Low complexity-rich tracts occupy residues 84-98 (TASTSSPATPSPVSD) and 124-140 (AANHTETTATTAASTPA). The segment covering 141–152 (KPKEADQQEKQS) has biased composition (basic and acidic residues).

The protein belongs to the TatB family. The Tat system comprises two distinct complexes: a TatABC complex, containing multiple copies of TatA, TatB and TatC subunits, and a separate TatA complex, containing only TatA subunits. Substrates initially bind to the TatABC complex, which probably triggers association of the separate TatA complex to form the active translocon.

The protein localises to the cell inner membrane. Its function is as follows. Part of the twin-arginine translocation (Tat) system that transports large folded proteins containing a characteristic twin-arginine motif in their signal peptide across membranes. Together with TatC, TatB is part of a receptor directly interacting with Tat signal peptides. TatB may form an oligomeric binding site that transiently accommodates folded Tat precursor proteins before their translocation. In Zymomonas mobilis subsp. mobilis (strain ATCC 31821 / ZM4 / CP4), this protein is Sec-independent protein translocase protein TatB.